The following is a 227-amino-acid chain: Probable septum site-determining protein MinC (227 aa).

Belongs to the MinC family. In terms of assembly, interacts with MinD and FtsZ.

In terms of biological role, cell division inhibitor that blocks the formation of polar Z ring septums. Rapidly oscillates between the poles of the cell to destabilize FtsZ filaments that have formed before they mature into polar Z rings. Prevents FtsZ polymerization. This is Probable septum site-determining protein MinC from Acetivibrio thermocellus (strain ATCC 27405 / DSM 1237 / JCM 9322 / NBRC 103400 / NCIMB 10682 / NRRL B-4536 / VPI 7372) (Clostridium thermocellum).